A 215-amino-acid polypeptide reads, in one-letter code: N-(5'-phosphoribosyl)anthranilate isomerase (215 aa).

It belongs to the TrpF family.

It catalyses the reaction N-(5-phospho-beta-D-ribosyl)anthranilate = 1-(2-carboxyphenylamino)-1-deoxy-D-ribulose 5-phosphate. Its pathway is amino-acid biosynthesis; L-tryptophan biosynthesis; L-tryptophan from chorismate: step 3/5. In Parvibaculum lavamentivorans (strain DS-1 / DSM 13023 / NCIMB 13966), this protein is N-(5'-phosphoribosyl)anthranilate isomerase.